Consider the following 86-residue polypeptide: Photosystem I reaction center subunit PsaK (86 aa).

Residues 15-34 (PWSTQVAMVMITCNLLAIVA) traverse the membrane as a helical segment.

Belongs to the PsaG/PsaK family.

It is found in the plastid. The protein localises to the chloroplast thylakoid membrane. In Pyropia yezoensis (Susabi-nori), this protein is Photosystem I reaction center subunit PsaK.